The primary structure comprises 134 residues: MAILISPTNNTGWGLGTHKLFGGAKQKSDQHPVYVQAHYRASWGSKGRRRRQGRARGAPLDPKTEAEMVATIDEVARNGPPAARLVLEAARRVGAYNLRRARKLTPAGRAMMAMRARQMVKQAKKRKRRVRFRQ.

The propeptide occupies 2-23 (AILISPTNNTGWGLGTHKLFGG). The segment at 40 to 62 (RASWGSKGRRRRQGRARGAPLDP) is disordered. The short motif at 125–134 (KRKRRVRFRQ) is the Nuclear localization signal element.

The protein belongs to the adenoviridae histone-like nucleoprotein family. Interacts with the core-capsid bridging protein; this interaction bridges the virus core to the capsid. Interacts with host NPM1; this interaction might play a role in placing the pre-histone-like nucleoprotein on the viral DNA or regulating viral gene expression. Interacts with host HMGB1; this interaction inhibits host immune response. In terms of processing, cleaved near the N-terminus by the viral protease during virion maturation to form the mature protein.

It is found in the virion. The protein localises to the host nucleus. It localises to the host nucleolus. In terms of biological role, plays a role in the inhibition of host immune response within the nucleus. Interacts with cellular nucleosomes and immobilizes the host immune danger signal HMGB1 on chromatin. In turn, prevents HMGB1 release out of the cell and thus decreases inflammation. Also plays a role in the wrapping and condensation of the viral DNA. May also promote viral genome import into the nucleus. This Canis lupus familiaris (Dog) protein is Pre-histone-like nucleoprotein.